A 265-amino-acid polypeptide reads, in one-letter code: Thymidine kinase 2, mitochondrial (265 aa).

A mitochondrion-targeting transit peptide spans 1 to 33; the sequence is MLLWPLRGWAARALRCFGPGSRGSPASGPGPRR. Positions 20–32 are enriched in low complexity; sequence GSRGSPASGPGPR. The interval 20–47 is disordered; sequence GSRGSPASGPGPRRVQRRAWPPDKEQEK. 57 to 65 contacts ATP; that stretch reads GNIASGKTT. The Proton acceptor role is filled by glutamate 133.

This sequence belongs to the DCK/DGK family. Monomer. In terms of tissue distribution, predominantly expressed in liver, pancreas, muscle, and brain.

It localises to the mitochondrion. The catalysed reaction is thymidine + ATP = dTMP + ADP + H(+). It carries out the reaction 2'-deoxycytidine + ATP = dCMP + ADP + H(+). It catalyses the reaction 2'-deoxyuridine + ATP = dUMP + ADP + H(+). In terms of biological role, phosphorylates thymidine, deoxycytidine, and deoxyuridine in the mitochondrial matrix. In non-replicating cells, where cytosolic dNTP synthesis is down-regulated, mtDNA synthesis depends solely on TK2 and DGUOK. Widely used as target of antiviral and chemotherapeutic agents. The polypeptide is Thymidine kinase 2, mitochondrial (Homo sapiens (Human)).